The following is a 352-amino-acid chain: Cyclin-dependent kinase-like 1 (352 aa).

Positions 4-287 (YEKIGKIGEG…CEQLLQHPYF (284 aa)) constitute a Protein kinase domain. ATP is bound by residues 10-18 (IGEGSYGVV) and Lys33. The short motif at 45-51 (KKIALRE) is the [NKR]KIAxRE element. Catalysis depends on Asp126, which acts as the Proton acceptor.

It belongs to the protein kinase superfamily. CMGC Ser/Thr protein kinase family. CDC2/CDKX subfamily.

The protein resides in the cytoplasm. The protein localises to the nucleus. The enzyme catalyses L-seryl-[protein] + ATP = O-phospho-L-seryl-[protein] + ADP + H(+). It catalyses the reaction L-threonyl-[protein] + ATP = O-phospho-L-threonyl-[protein] + ADP + H(+). The polypeptide is Cyclin-dependent kinase-like 1 (Rattus norvegicus (Rat)).